We begin with the raw amino-acid sequence, 215 residues long: Guanylate kinase (215 aa).

The region spanning 6–185 (GAILVLSGPS…SEKLLLSIAR (180 aa)) is the Guanylate kinase-like domain. Residue 13–20 (GPSGSGKS) coordinates ATP.

This sequence belongs to the guanylate kinase family.

It is found in the cytoplasm. The enzyme catalyses GMP + ATP = GDP + ADP. In terms of biological role, essential for recycling GMP and indirectly, cGMP. The chain is Guanylate kinase from Wolinella succinogenes (strain ATCC 29543 / DSM 1740 / CCUG 13145 / JCM 31913 / LMG 7466 / NCTC 11488 / FDC 602W) (Vibrio succinogenes).